The chain runs to 1403 residues: MANCSQEELDEEFEQFMKELSDDSFENSDKTARQSKKEMKKKDTVPWWITEDDFKDDGLLGTNVSYLKTKKTSQPVMEIEEESAEKIQFLKSSGTSLLSTDSLETNELVVSELNHSSLGVGLDTLEEQEEKEQFFARLEKGLTSSIDYSRLNKELDSNDSTHFKALHSNQANAELTDDEHENESKHEELAENYSDDFEDEYVGAPLTTKDEEMPSKENSKSEKISVPKQEEEKTGMLANVVLLDSLDSVAEVNLDEQDKITPKPRCLPEMTENEMTGTGVSYGQSSSDVEALHQAYCHIAHSLGDEDKQKIESNTVEDIKSSVKGHPQENEENSKNISTMESDLPTVEELMKPIRIDSFGISGFDLQPVSSEKVAERKETEFFSSLPLKMNPNILSQDSQHVNLFFDKNDENVILQKTTNESMENSCPQVTEVTATEEHVDKMYLNILRKKITVNSSSLSQDDKINKTYRSQLSSEEEGAVMGKQVPYKKARSAPPLLKRKPQSGLYASVRSSGYGKPSSPLKMFSTLEKKTSEDIIKSKNLRSISTSNQPRKKEILSGTKLIKPAALDKPAHKTESCLSTRKKSENPTETDSCIQFQTDSLGYCGENKEKKLLMFKRVQEAEDKWRGAQALIEQIKATFSEKEKELENKLEELKKQQEKELFKLNQDNYILQAKLSSFEETNKKQRWLHFGEAADPVTGEKLKQIQKEIQEQETLLQGYQQENERLYNQVKDLQEQNKKNEERMFKENQSLFSEVASLKEQMHKSRFLSQVVEDSEPTRNQNFTDLLAELRMAQKEKDSLLEDIKRLKQDKQALEVDFEKMKKERDQAKDQIAYVTGEKLYEIKILEETHKQEISRLQKRLQWYAENQELLDKDALRLREANEEIEKLKLEIEKLKAESGNPSIRQKIRLKDKAADAKKIQDLERQVKEMEGILKRRYPNSLPALILAASAAGDTVDKNTVEFMEKRIKKLEADLEGKDEDAKKSLRTMEQQFQKMKIQYEQRLEQQEQLLACKLNQHDSPRIKALEKELDDIKEAHQITVRNLEAEIDVLKHQNAELDVKKNDKDDEDFQSIEFQVEQAHAKAKLVRLNEELAAKKREIQDLSKTVERLQKDRRMMLSNQNSKGREEMSAKRAKKDVLHSSKGNANSFPGTLDSKLYQPHTFTDSHVSEVLQENYRLKNELEGLISEKNELKMKSEAVMNQFENSMRRVKEDTAAHIASLKASHQREIEKLLCQNAVENSSSKVAELNRKIATQEVLIRHFQSQVNELQSKQESLVVSEVREEILQKEITKLLEELREAKENHTPEMKHFVGLEKKIKQMEMRHAQREQELQQIIQQTHQVVETEQNKEVEKWKRLAQLKNRELEKFRTELDSILDVLRELHRQGVVVPVAFADEMNAPEY.

A disordered region spans residues 18 to 42 (KELSDDSFENSDKTARQSKKEMKKK). 2 positions are modified to phosphoserine: serine 157 and serine 160. The interval 170–231 (QANAELTDDE…EKISVPKQEE (62 aa)) is disordered. A compositionally biased stretch (basic and acidic residues) spans 208-231 (TKDEEMPSKENSKSEKISVPKQEE). Serine 474 and serine 475 each carry phosphoserine. The disordered stretch occupies residues 476 to 504 (EEEGAVMGKQVPYKKARSAPPLLKRKPQS). The span at 487–502 (PYKKARSAPPLLKRKP) shows a compositional bias: basic residues. Coiled-coil stretches lie at residues 617–670 (KRVQ…QDNY), 698–1121 (VTGE…MLSN), 1171–1206 (EVLQ…QFEN), and 1235–1386 (CQNA…LHRQ).

It belongs to the CEP162 family. Interacts with CEP290. Interacts with CPNE4. Interacts with alpha-tubulin.

It localises to the cytoplasm. The protein resides in the cytoskeleton. Its subcellular location is the microtubule organizing center. The protein localises to the centrosome. It is found in the centriole. It localises to the spindle. The protein resides in the nucleus. Functionally, required to promote assembly of the transition zone in primary cilia. Acts by specifically recognizing and binding the axonemal microtubule. Localizes to the distal ends of centrioles before ciliogenesis and directly binds to axonemal microtubule, thereby promoting and restricting transition zone formation specifically at the cilia base. Required to mediate CEP290 association with microtubules. The chain is Centrosomal protein of 162 kDa (CEP162) from Homo sapiens (Human).